Here is a 101-residue protein sequence, read N- to C-terminus: NAD(P)H-quinone oxidoreductase subunit 4L, chloroplastic (101 aa).

The next 3 helical transmembrane spans lie at 2–22, 32–52, and 61–81; these read MTEY…YGLI, MCLE…SDLF, and IFSI…PAIV.

The protein belongs to the complex I subunit 4L family. In terms of assembly, NDH is composed of at least 16 different subunits, 5 of which are encoded in the nucleus.

It is found in the plastid. Its subcellular location is the chloroplast thylakoid membrane. It catalyses the reaction a plastoquinone + NADH + (n+1) H(+)(in) = a plastoquinol + NAD(+) + n H(+)(out). It carries out the reaction a plastoquinone + NADPH + (n+1) H(+)(in) = a plastoquinol + NADP(+) + n H(+)(out). NDH shuttles electrons from NAD(P)H:plastoquinone, via FMN and iron-sulfur (Fe-S) centers, to quinones in the photosynthetic chain and possibly in a chloroplast respiratory chain. The immediate electron acceptor for the enzyme in this species is believed to be plastoquinone. Couples the redox reaction to proton translocation, and thus conserves the redox energy in a proton gradient. The polypeptide is NAD(P)H-quinone oxidoreductase subunit 4L, chloroplastic (Calycanthus floridus var. glaucus (Eastern sweetshrub)).